We begin with the raw amino-acid sequence, 188 residues long: uncharacterized protein (188 aa).

Residues 57–80 are disordered; that stretch reads NDDVAPVAEGPKQERRSPSRNIGR.

This sequence belongs to the transposase 25 family.

This is an uncharacterized protein from Sinorhizobium fredii (strain NBRC 101917 / NGR234).